A 333-amino-acid chain; its full sequence is Acyl-CoA wax alcohol acyltransferase 2 (333 aa).

A run of 3 helical transmembrane segments spans residues 15–35, 38–58, and 130–150; these read VFAV…VIAV, YLVV…WLAF, and IFPG…MPFL.

Belongs to the diacylglycerol acyltransferase family. In terms of assembly, monomer. Highly expressed in skin, where it is primarily restricted to undifferentiated peripheral sebocytes. Also expressed at lower level in other tissues except pancreas.

The protein resides in the endoplasmic reticulum membrane. It catalyses the reaction a long chain fatty alcohol + a fatty acyl-CoA = a wax ester + CoA. The enzyme catalyses all-trans-retinol + an acyl-CoA = an all-trans-retinyl ester + CoA. The catalysed reaction is an acyl-CoA + a 1,2-diacyl-sn-glycerol = a triacyl-sn-glycerol + CoA. It carries out the reaction 11-cis-retinol + a fatty acyl-CoA = 11-cis-retinyl ester + CoA. It catalyses the reaction 9-cis-retinol + a fatty acyl-CoA = 9-cis-retinyl ester + CoA. The enzyme catalyses 13-cis-retinol + a fatty acyl-CoA = 13-cis-retinyl ester + CoA. The catalysed reaction is a 1-acylglycerol + an acyl-CoA = a 1,2-diacylglycerol + CoA. It carries out the reaction 1-O-alkylglycerol + an acyl-CoA = 1-O-alkyl-3-acylglycerol + CoA. It catalyses the reaction a 2-acylglycerol + an acyl-CoA = a 1,2-diacyl-sn-glycerol + CoA. The enzyme catalyses 2-(9Z-octadecenoyl)-glycerol + hexadecanoyl-CoA = 1-hexadecanoyl-2-(9Z-octadecenoyl)-sn-glycerol + CoA. The catalysed reaction is 1,2-di-(9Z-octadecenoyl)-sn-glycerol + hexadecanoyl-CoA = 1,2-di-(9Z)-octadecenoyl-3-hexadecanoyl-sn-glycerol + CoA. It carries out the reaction hexadecan-1-ol + hexadecanoyl-CoA = hexadecanyl hexadecanoate + CoA. It catalyses the reaction hexadecane-1,2-diol + hexadecanoyl-CoA = 2-hydroxyhexadecyl hexadecanoate + CoA. The enzyme catalyses 9-cis-retinol + hexadecanoyl-CoA = 9-cis-retinyl hexadecanoate + CoA. The catalysed reaction is all-trans-retinol + hexadecanoyl-CoA = all-trans-retinyl hexadecanoate + CoA. It carries out the reaction 1,2-di-(9Z-octadecenoyl)-sn-glycerol + (9Z)-octadecenoyl-CoA = 1,2,3-tri-(9Z-octadecenoyl)-glycerol + CoA. It catalyses the reaction hexadecan-1-ol + (9Z)-octadecenoyl-CoA = hexadecanyl (9Z)-octadecenoate + CoA. The enzyme catalyses (9Z)-hexadecen-1-ol + (9Z)-octadecenoyl-CoA = 1-O-(9Z)-hexadecenyl (9Z)-octadecenoate + CoA. The catalysed reaction is octadecan-1-ol + (9Z)-octadecenoyl-CoA = 1-O-octadecyl (9Z)-octadecenoate + CoA. It carries out the reaction (9Z)-octadecen-1-ol + (9Z)-octadecenoyl-CoA = 1-O-(9Z)-octadecenyl (9Z)-octadecenoate + CoA. It catalyses the reaction hexadecan-1-ol + (9Z)-hexadecenoyl-CoA = 1-O-hexadecyl (9Z)-hexadecenoate + CoA. The enzyme catalyses hexadecan-1-ol + octadecanoyl-CoA = hexadecanyl octadecanoate + CoA. The catalysed reaction is 11-cis-retinol + hexadecanoyl-CoA = 11-cis-retinyl hexadecanoate + CoA. It carries out the reaction 1-O-(9Z-octadecenyl)-glycerol + (9Z)-octadecenoyl-CoA = 1-O-(9Z-octadecyl)-3-(9Z-octadecenoyl)-glycerol + CoA. It catalyses the reaction 1-(9Z-octadecenoyl)-glycerol + (9Z)-octadecenoyl-CoA = 1,2-di-(9Z-octadecenoyl)-glycerol + CoA. The enzyme catalyses 11-cis-retinol + tetradecanoyl-CoA = 11-cis-retinyl tetradecanoate + CoA. The catalysed reaction is 9-cis-retinol + tetradecanoyl-CoA = 9-cis-retinyl tetradecanoate + CoA. It carries out the reaction 13-cis-retinol + tetradecanoyl-CoA = 13-cis-retinyl tetradecanoate + CoA. It catalyses the reaction all-trans-retinol + tetradecanoyl-CoA = all-trans-retinyl tetradecanoate + CoA. The enzyme catalyses tetradecan-1-ol + tetradecanoyl-CoA = tetradecanyl tetradecanoate + CoA. With respect to regulation, 11-cis retinoids act as allosteric modulators of acyl-CoA retinol O-fatty-acyltransferase (ARAT) activity by suppressing esterification of 9-cis, 13-cis, or all-trans retinols concurrently increasing the enzyme specificity toward 11-cis isomer. Functionally, acyltransferase that catalyzes the formation of ester bonds between fatty alcohols and fatty acyl-CoAs to form wax monoesters. Shows a preference for medium chain acyl-CoAs from C12 to C16 in length and fatty alcohols shorter than C20, as the acyl donors and acceptors, respectively. Also possesses acyl-CoA retinol acyltransferase (ARAT) activity that preferentially esterifies 11-cis-retinol, a chromophore precursor of bleached opsin pigments in cone cells. Shows higher catalytic efficiency toward 11-cis-retinol versus 9-cis-retinol, 13-cis-retinol, and all-trans-retinol substrates. This Homo sapiens (Human) protein is Acyl-CoA wax alcohol acyltransferase 2 (AWAT2).